Here is a 116-residue protein sequence, read N- to C-terminus: NADH-ubiquinone oxidoreductase chain 3 (116 aa).

3 helical membrane passes run 6–26 (FMLL…FWLA), 56–76 (FFLV…LLPL), and 85–105 (PLLT…GLVY).

Belongs to the complex I subunit 3 family.

The protein resides in the mitochondrion membrane. It catalyses the reaction a ubiquinone + NADH + 5 H(+)(in) = a ubiquinol + NAD(+) + 4 H(+)(out). Its function is as follows. Core subunit of the mitochondrial membrane respiratory chain NADH dehydrogenase (Complex I) that is believed to belong to the minimal assembly required for catalysis. Complex I functions in the transfer of electrons from NADH to the respiratory chain. The immediate electron acceptor for the enzyme is believed to be ubiquinone. This chain is NADH-ubiquinone oxidoreductase chain 3 (MT-ND3), found in Struthio camelus (Common ostrich).